Reading from the N-terminus, the 1161-residue chain is MTFGTVLLLSVLASYHGFNLDVEEPTIFQEDAGGFGQSVVQFGGSRLVVGAPLEVVAANQTGRLYDCAAATGMCQPIPLHIRPEAVNMSLGLTLAASTNGSRLLACGPTLHRVCGENSYSKGSCLLLGSRWEIIQTVPDATPECPHQEMDIVFLIDGSGSIDQNDFNQMKGFVQAVMGQFEGTDTLFALMQYSNLLKIHFTFTQFRTSPSQQSLVDPIVQLKGLTFTATGILTVVTQLFHHKNGARKSAKKILIVITDGQKYKDPLEYSDVIPQAEKAGIIRYAIGVGHAFQGPTARQELNTISSAPPQDHVFKVDNFAALGSIQKQLQEKIYAVEGTQSRASSSFQHEMSQEGFSTALTMDGLFLGAVGSFSWSGGAFLYPPNMSPTFINMSQENVDMRDSYLGYSTELALWKGVQNLVLGAPRYQHTGKAVIFTQVSRQWRKKAEVTGTQIGSYFGASLCSVDVDSDGSTDLILIGAPHYYEQTRGGQVSVCPLPRGRVQWQCDAVLRGEQGHPWGRFGAALTVLGDVNEDKLIDVAIGAPGEQENRGAVYLFHGASESGISPSHSQRIASSQLSPRLQYFGQALSGGQDLTQDGLMDLAVGARGQVLLLRSLPVLKVGVAMRFSPVEVAKAVYRCWEEKPSALEAGDATVCLTIQKSSLDQLGDIQSSVRFDLALDPGRLTSRAIFNETKNPTLTRRKTLGLGIHCETLKLLLPDCVEDVVSPIILHLNFSLVREPIPSPQNLRPVLAVGSQDLFTASLPFEKNCGQDGLCEGDLGVTLSFSGLQTLTVGSSLELNVIVTVWNAGEDSYGTVVSLYYPAGLSHRRVSGAQKQPHQSALRLACETVPTEDEGLRSSRCSVNHPIFHEGSNGTFIVTFDVSYKATLGDRMLMRASASSENNKASSSKATFQLELPVKYAVYTMISRQEESTKYFNFATSDEKKMKEAEHRYRVNNLSQRDLAISINFWVPVLLNGVAVWDVVMEAPSQSLPCVSERKPPQHSDFLTQISRSPMLDCSIADCLQFRCDVPSFSVQEELDFTLKGNLSFGWVRETLQKKVLVVSVAEITFDTSVYSQLPGQEAFMRAQMEMVLEEDEVYNAIPIIMGSSVGALLLLALITATLYKLGFFKRHYKEMLEDKPEDTATFSGDDFSCVAPNVPLS.

Residues 1-17 form the signal peptide; that stretch reads MTFGTVLLLSVLASYHG. The Extracellular portion of the chain corresponds to 18–1099; it reads FNLDVEEPTI…MVLEEDEVYN (1082 aa). FG-GAP repeat units follow at residues 19–76 and 77–136; these read NLDV…MCQP and IPLH…IIQT. The N-linked (GlcNAc...) asparagine glycan is linked to asparagine 59. Cysteines 67 and 74 form a disulfide. N-linked (GlcNAc...) asparagine glycans are attached at residues asparagine 87 and asparagine 99. A disulfide bridge connects residues cysteine 106 and cysteine 124. The VWFA domain maps to 150-332; it reads DIVFLIDGSG…SIQKQLQEKI (183 aa). FG-GAP repeat units follow at residues 339–390, 391–442, 443–503, 506–564, and 569–629; these read QSRA…PTFI, NMSQ…SRQW, RKKA…RVQW, DAVL…SGIS, and QRIA…FSPV. Asparagine 391 carries an N-linked (GlcNAc...) asparagine glycan. Ca(2+) is bound by residues aspartate 465, aspartate 467, aspartate 469, aspartate 473, aspartate 529, asparagine 531, aspartate 533, aspartate 537, aspartate 592, aspartate 596, and aspartate 600. Cysteines 654 and 709 form a disulfide. 2 N-linked (GlcNAc...) asparagine glycosylation sites follow: asparagine 690 and asparagine 732. 2 cysteine pairs are disulfide-bonded: cysteine 768–cysteine 774 and cysteine 845–cysteine 860. N-linked (GlcNAc...) asparagine glycans are attached at residues asparagine 872 and asparagine 956. 2 disulfides stabilise this stretch: cysteine 993–cysteine 1017 and cysteine 1022–cysteine 1027. N-linked (GlcNAc...) asparagine glycosylation occurs at asparagine 1045. Residues 1100–1120 form a helical membrane-spanning segment; it reads AIPIIMGSSVGALLLLALITA. The Cytoplasmic portion of the chain corresponds to 1121-1161; the sequence is TLYKLGFFKRHYKEMLEDKPEDTATFSGDDFSCVAPNVPLS. The short motif at 1126 to 1130 is the GFFKR motif element; sequence GFFKR.

The protein belongs to the integrin alpha chain family. As to quaternary structure, heterodimer of an alpha and a beta subunit. Alpha-D associates with beta-2. In terms of tissue distribution, expressed moderately on myelomonocytic cell lines and subsets of peripheral blood leukocytes and strongly on tissue-specialized cells, including macrophages foam cells within atherosclerotic plaques, and on splenic red pulp macrophages.

The protein resides in the membrane. Integrin alpha-D/beta-2 is a receptor for ICAM3 and VCAM1. May play a role in the atherosclerotic process such as clearing lipoproteins from plaques and in phagocytosis of blood-borne pathogens, particulate matter, and senescent erythrocytes from the blood. The protein is Integrin alpha-D (ITGAD) of Homo sapiens (Human).